Consider the following 497-residue polypeptide: Probable cytosol aminopeptidase (497 aa).

Mn(2+) is bound by residues lysine 262 and aspartate 267. Lysine 274 is an active-site residue. Residues aspartate 285, aspartate 344, and glutamate 346 each contribute to the Mn(2+) site. Arginine 348 is a catalytic residue.

The protein belongs to the peptidase M17 family. The cofactor is Mn(2+).

Its subcellular location is the cytoplasm. The enzyme catalyses Release of an N-terminal amino acid, Xaa-|-Yaa-, in which Xaa is preferably Leu, but may be other amino acids including Pro although not Arg or Lys, and Yaa may be Pro. Amino acid amides and methyl esters are also readily hydrolyzed, but rates on arylamides are exceedingly low.. The catalysed reaction is Release of an N-terminal amino acid, preferentially leucine, but not glutamic or aspartic acids.. In terms of biological role, presumably involved in the processing and regular turnover of intracellular proteins. Catalyzes the removal of unsubstituted N-terminal amino acids from various peptides. This chain is Probable cytosol aminopeptidase, found in Rhizobium etli (strain ATCC 51251 / DSM 11541 / JCM 21823 / NBRC 15573 / CFN 42).